The sequence spans 128 residues: Large ribosomal subunit protein bL17 (128 aa).

Belongs to the bacterial ribosomal protein bL17 family. Part of the 50S ribosomal subunit. Contacts protein L32.

In Streptococcus pyogenes serotype M49 (strain NZ131), this protein is Large ribosomal subunit protein bL17.